A 631-amino-acid polypeptide reads, in one-letter code: Probable sulfate transporter 3.3 (631 aa).

The Cytoplasmic segment spans residues 1 to 69 (MEVHKVVAPP…EYSFSLLKSD (69 aa)). The helical transmembrane segment at 70-90 (VVSGLTIASLAIPQGISYAKL) threads the bilayer. Residues 91–92 (AN) lie on the Extracellular side of the membrane. Residues 93–113 (LPPIVGLYSSFVPPLVYAVLG) traverse the membrane as a helical segment. Over 114 to 117 (SSRD) the chain is Cytoplasmic. The helical transmembrane segment at 118 to 138 (LAVGPVSIASLILGSMLRQQV) threads the bilayer. The Extracellular segment spans residues 139–144 (SPVDDP). Residues 145–165 (VLFLQLAFSSTFFAGLFQASL) traverse the membrane as a helical segment. Residues 166-171 (GILRLG) are Cytoplasmic-facing. Residues 172–192 (FIIDFLSKATLIGFMGGAAII) traverse the membrane as a helical segment. Residues 193–223 (VSLQQLKGLLGITHFTKHMSVVPVLSSVFQH) are Extracellular-facing. The chain crosses the membrane as a helical span at residues 224-244 (TNEWSWQTIVMGVCFLLFLLS). Residues 245–256 (TRHLSMKKPKLF) are Cytoplasmic-facing. The chain crosses the membrane as a helical span at residues 257–277 (WVSAGAPLLSVIVSTLLVFVF). Over 278–309 (RAERHGISVIGKLPEGLNPPSWNMLQFHGSHL) the chain is Extracellular. A helical transmembrane segment spans residues 310-330 (ALVAKTGLVTGIVSLTEGIAV). Residues 331–347 (GRTFAALKNYHVDGNKE) are Cytoplasmic-facing. A helical transmembrane segment spans residues 348 to 368 (MIAIGLMNVVGSATSCYVTTG). At 369–384 (AFSRSAVNNNAGAKTA) the chain is on the extracellular side. The helical transmembrane segment at 385–405 (VSNIVMSVTVMVTLLFLMPLF) threads the bilayer. Over 406-410 (EYTPN) the chain is Cytoplasmic. Residues 411–431 (VVLGAIIVTAVIGLIDLPAAC) traverse the membrane as a helical segment. Residues 432 to 441 (HIWKIDKFDF) lie on the Extracellular side of the membrane. The chain crosses the membrane as a helical span at residues 442–462 (LVMLCAFFGVIFLSVQNGLAI). Residues 463–631 (AVGLSLFKIL…SLKGPSLSNV (169 aa)) are Cytoplasmic-facing. Residues 497 to 621 (HYKEAQRIPG…LTVAEAVASL (125 aa)) form the STAS domain.

Belongs to the SLC26A/SulP transporter (TC 2.A.53) family. In terms of tissue distribution, expressed only in leaves.

Its subcellular location is the membrane. H(+)/sulfate cotransporter that may play a role in the regulation of sulfate assimilation. This Arabidopsis thaliana (Mouse-ear cress) protein is Probable sulfate transporter 3.3 (SULTR3;3).